The following is a 441-amino-acid chain: Zinc finger and BTB domain-containing protein 8A (441 aa).

In terms of domain architecture, BTB spans cysteine 24–glycine 92. The tract at residues leucine 135–glutamine 248 is disordered. Residues serine 161 and serine 167 each carry the phosphoserine modification. Glycyl lysine isopeptide (Lys-Gly) (interchain with G-Cter in SUMO2) cross-links involve residues lysine 178, lysine 182, and lysine 199. Basic and acidic residues-rich tracts occupy residues alanine 198–lysine 208 and glycine 227–glutamine 242. C2H2-type zinc fingers lie at residues phenylalanine 282–histidine 304 and tyrosine 310–histidine 333. Lysine 437 is covalently cross-linked (Glycyl lysine isopeptide (Lys-Gly) (interchain with G-Cter in SUMO2)).

It is found in the nucleus. In terms of biological role, may be involved in transcriptional regulation. The sequence is that of Zinc finger and BTB domain-containing protein 8A (Zbtb8a) from Rattus norvegicus (Rat).